The chain runs to 197 residues: Phosphoheptose isomerase (197 aa).

Residues 37–197 (MLQCLMNDGK…CIDSVLLEGM (161 aa)) form the SIS domain. 52–54 (NGG) is a binding site for substrate. Positions 61 and 65 each coordinate Zn(2+). Residues Glu-65, 94–95 (ND), 120–122 (STS), Ser-125, and Gln-175 each bind substrate. 2 residues coordinate Zn(2+): Gln-175 and His-183.

It belongs to the SIS family. GmhA subfamily. Homotetramer. Zn(2+) is required as a cofactor.

Its subcellular location is the cytoplasm. It carries out the reaction 2 D-sedoheptulose 7-phosphate = D-glycero-alpha-D-manno-heptose 7-phosphate + D-glycero-beta-D-manno-heptose 7-phosphate. It functions in the pathway carbohydrate biosynthesis; D-glycero-D-manno-heptose 7-phosphate biosynthesis; D-glycero-alpha-D-manno-heptose 7-phosphate and D-glycero-beta-D-manno-heptose 7-phosphate from sedoheptulose 7-phosphate: step 1/1. Its pathway is bacterial outer membrane biogenesis; LOS core biosynthesis. In terms of biological role, catalyzes the isomerization of sedoheptulose 7-phosphate in D-glycero-D-manno-heptose 7-phosphate. The sequence is that of Phosphoheptose isomerase from Neisseria meningitidis serogroup A / serotype 4A (strain DSM 15465 / Z2491).